The primary structure comprises 212 residues: Large ribosomal subunit protein bL25 (212 aa).

The interval 181 to 212 is disordered; it reads LSEPKEEVIEEDVEEVSADVPTVSETEEEDAE. Residues 188-197 are compositionally biased toward acidic residues; the sequence is VIEEDVEEVS.

The protein belongs to the bacterial ribosomal protein bL25 family. CTC subfamily. As to quaternary structure, part of the 50S ribosomal subunit; part of the 5S rRNA/L5/L18/L25 subcomplex. Contacts the 5S rRNA. Binds to the 5S rRNA independently of L5 and L18.

This is one of the proteins that binds to the 5S RNA in the ribosome where it forms part of the central protuberance. This Finegoldia magna (strain ATCC 29328 / DSM 20472 / WAL 2508) (Peptostreptococcus magnus) protein is Large ribosomal subunit protein bL25.